Reading from the N-terminus, the 215-residue chain is Eukaryotic translation initiation factor 4E (215 aa).

A disordered region spans residues 1 to 27 (MAERDSEPRVNIIRPDDEPEVEEERVP). Ser207 carries the phosphoserine; by PKC modification.

Belongs to the eukaryotic initiation factor 4E family. As to quaternary structure, eIF4F is a multi-subunit complex, the composition of which varies with external and internal environmental conditions. It is composed of at least eIF4A, eIF4E and eIF4G. eIF4E is also known to interact with other partners. In terms of processing, phosphorylation increases the ability of the protein to bind to mRNA caps and to form the eIF4F complex.

In terms of biological role, recognizes and binds the 7-methylguanosine-containing mRNA cap during an early step in the initiation of protein synthesis and facilitates ribosome binding by inducing the unwinding of the mRNAs secondary structures. This Aplysia californica (California sea hare) protein is Eukaryotic translation initiation factor 4E.